The following is an 82-amino-acid chain: ATP synthase subunit c, chloroplastic (82 aa).

Helical transmembrane passes span 7–27 (GASVIAAGLAIGLASIGPGIG) and 57–77 (LAFMESLTIYGLVVALCLLFA).

It belongs to the ATPase C chain family. In terms of assembly, F-type ATPases have 2 components, F(1) - the catalytic core - and F(0) - the membrane proton channel. F(1) has five subunits: alpha(3), beta(3), gamma(1), delta(1), epsilon(1). F(0) has four main subunits: a(1), b(1), b'(1) and c(10-14). The alpha and beta chains form an alternating ring which encloses part of the gamma chain. F(1) is attached to F(0) by a central stalk formed by the gamma and epsilon chains, while a peripheral stalk is formed by the delta, b and b' chains.

It is found in the plastid. Its subcellular location is the chloroplast thylakoid membrane. Its function is as follows. F(1)F(0) ATP synthase produces ATP from ADP in the presence of a proton or sodium gradient. F-type ATPases consist of two structural domains, F(1) containing the extramembraneous catalytic core and F(0) containing the membrane proton channel, linked together by a central stalk and a peripheral stalk. During catalysis, ATP synthesis in the catalytic domain of F(1) is coupled via a rotary mechanism of the central stalk subunits to proton translocation. In terms of biological role, key component of the F(0) channel; it plays a direct role in translocation across the membrane. A homomeric c-ring of between 10-14 subunits forms the central stalk rotor element with the F(1) delta and epsilon subunits. This is ATP synthase subunit c, chloroplastic from Emiliania huxleyi (Coccolithophore).